We begin with the raw amino-acid sequence, 322 residues long: Ornithine carbamoyltransferase (322 aa).

Residues 67–70 (STRT), Q94, R118, and 145–148 (HPCQ) each bind carbamoyl phosphate. L-ornithine contacts are provided by residues N176, D240, and 244–245 (SM). Carbamoyl phosphate-binding positions include 280–281 (CL) and R308.

Belongs to the aspartate/ornithine carbamoyltransferase superfamily. OTCase family.

The protein localises to the cytoplasm. It carries out the reaction carbamoyl phosphate + L-ornithine = L-citrulline + phosphate + H(+). It participates in amino-acid biosynthesis; L-arginine biosynthesis; L-arginine from L-ornithine and carbamoyl phosphate: step 1/3. Functionally, reversibly catalyzes the transfer of the carbamoyl group from carbamoyl phosphate (CP) to the N(epsilon) atom of ornithine (ORN) to produce L-citrulline. This chain is Ornithine carbamoyltransferase, found in Oceanobacillus iheyensis (strain DSM 14371 / CIP 107618 / JCM 11309 / KCTC 3954 / HTE831).